Here is a 239-residue protein sequence, read N- to C-terminus: EF-hand domain-containing protein D1 (239 aa).

Basic and acidic residues predominate over residues 1 to 18 (MASEELACKLERRLRREE). The interval 1 to 53 (MASEELACKLERRLRREEAEESGPQLAPLGAPAPEPKPEPEPPARAPTASADA) is disordered. 2 EF-hand domains span residues 90–125 (RLIK…LGAP) and 126–161 (QTHL…AAAG). Positions 103, 107, 114, 139, 141, 143, 145, and 150 each coordinate Ca(2+). S201 carries the post-translational modification Phosphoserine.

The protein resides in the mitochondrion inner membrane. Acts as a calcium sensor for mitochondrial flash (mitoflash) activation, an event characterized by stochastic bursts of superoxide production. May play a role in neuronal differentiation. In Homo sapiens (Human), this protein is EF-hand domain-containing protein D1 (EFHD1).